The sequence spans 782 residues: Ribosome biogenesis protein ERB1 (782 aa).

Disordered stretches follow at residues 1–123 and 339–361; these read MGSK…RIEK and PEEYLPSKEEREEWENADPEDRE. Over residues 35–86 the composition is skewed to acidic residues; that stretch reads SEDEEDYLPSDDDDDVEDSENEGTGASEDDDDDDDDDDILSDDIPSDVDSEE. A compositionally biased stretch (basic and acidic residues) spans 105–123; it reads VDPKREEDDGADRNYRIEK. WD repeat units follow at residues 433–472, 476–516, 567–609, 612–650, 653–692, 696–736, and 752–782; these read GHEGRVRSVSVDPTGVALATGGDDGTVRVWELLTGRQVWS, NSEE…VTPA, TVRS…TQIP, KLSGLAQTAAFHPLRPLFFVATQRTIRCYDLQKLELVKV, PGAKWISSFDIHPGGDNLIVGSYDKRLLWHDLDLSNRPYK, FHGQ…DQLE, and VSKLGVLDIDWHPREPWCVSAGADGTARLWM.

It belongs to the WD repeat BOP1/ERB1 family. Component of the NOP7 complex, composed of ERB1, NOP7 and YTM1. The complex is held together by ERB1, which interacts with NOP7 via its N-terminal domain and with YTM1 via a high-affinity interaction between the seven-bladed beta-propeller domains of the 2 proteins. The NOP7 complex associates with the 66S pre-ribosome.

Its subcellular location is the nucleus. It localises to the nucleolus. It is found in the nucleoplasm. Its function is as follows. Component of the NOP7 complex, which is required for maturation of the 25S and 5.8S ribosomal RNAs and formation of the 60S ribosome. The chain is Ribosome biogenesis protein ERB1 from Chaetomium globosum (strain ATCC 6205 / CBS 148.51 / DSM 1962 / NBRC 6347 / NRRL 1970) (Soil fungus).